The chain runs to 372 residues: tRNA pseudouridine synthase D (372 aa).

The Nucleophile role is filled by aspartate 85. In terms of domain architecture, TRUD spans 160 to 330; it reads GFANYFGYQR…MQGSRRFMWG (171 aa).

This sequence belongs to the pseudouridine synthase TruD family.

The enzyme catalyses uridine(13) in tRNA = pseudouridine(13) in tRNA. In terms of biological role, responsible for synthesis of pseudouridine from uracil-13 in transfer RNAs. This is tRNA pseudouridine synthase D from Campylobacter jejuni subsp. jejuni serotype O:2 (strain ATCC 700819 / NCTC 11168).